Reading from the N-terminus, the 709-residue chain is Polyribonucleotide nucleotidyltransferase (709 aa).

Asp489 and Asp495 together coordinate Mg(2+). Residues 556–615 (PKIDMIKIDVDKIKVVIGKGGETIDKIIAETGVKIDIDEEGNVSIFSSDQAAIDRTKDII) enclose the KH domain. Positions 625–693 (GEVYHAKVVR…DKGRVDASMK (69 aa)) constitute an S1 motif domain.

It belongs to the polyribonucleotide nucleotidyltransferase family. Requires Mg(2+) as cofactor.

It localises to the cytoplasm. The enzyme catalyses RNA(n+1) + phosphate = RNA(n) + a ribonucleoside 5'-diphosphate. Its function is as follows. Involved in mRNA degradation. Catalyzes the phosphorolysis of single-stranded polyribonucleotides processively in the 3'- to 5'-direction. This Streptococcus agalactiae serotype V (strain ATCC BAA-611 / 2603 V/R) protein is Polyribonucleotide nucleotidyltransferase.